The primary structure comprises 537 residues: Tegument protein BRRF2 (537 aa).

Disordered regions lie at residues R321–P366, A378–P398, S414–F466, and G486–V537. The span at E334–N347 shows a compositional bias: polar residues. Positions S423–G441 are enriched in low complexity. Residues D492–E517 are compositionally biased toward acidic residues.

It belongs to the lymphocryptovirus BRRF2 family.

The protein localises to the virion tegument. The chain is Tegument protein BRRF2 from Homo sapiens (Human).